A 278-amino-acid chain; its full sequence is HTH-type transcriptional activator RhaS (278 aa).

The HTH araC/xylS-type domain maps to 174-272 (NLLLAWLEDH…NWSPRDIRQG (99 aa)). 2 DNA-binding regions (H-T-H motif) span residues 191–212 (DAVADQFSLSLRTLHRQLKQQT) and 239–262 (VTDIAYRCGFSDSNHFSTLFRREF).

In terms of assembly, binds DNA as a dimer.

The protein resides in the cytoplasm. Activates expression of the rhaBAD and rhaT operons. This is HTH-type transcriptional activator RhaS from Shigella sonnei (strain Ss046).